A 139-amino-acid polypeptide reads, in one-letter code: MAMTVHCDIVSAEGEIFSGLVEMVVAHGNLGDLGIAPGHAPLITNLKPGPITLTKQGGTQEVFYISGGFLEVQPNMVKVLADTVQRAADLDEAQAQEALKAAENALNLKGADFDYGAAAARLAEAAAQLRTVQQMRKGK.

Belongs to the ATPase epsilon chain family. F-type ATPases have 2 components, CF(1) - the catalytic core - and CF(0) - the membrane proton channel. CF(1) has five subunits: alpha(3), beta(3), gamma(1), delta(1), epsilon(1). CF(0) has three main subunits: a, b and c.

The protein resides in the cell inner membrane. In terms of biological role, produces ATP from ADP in the presence of a proton gradient across the membrane. This chain is ATP synthase epsilon chain, found in Pseudomonas putida (strain GB-1).